A 118-amino-acid chain; its full sequence is Probable non-functional immunoglobulin lambda variable 1-50 (118 aa).

The first 19 residues, 1-19, serve as a signal peptide directing secretion; sequence MAWSSLLLTLLAHCTGSWA. The segment at 20–44 is framework-1; sequence QSVLTQPPSVSGAPGQRVTISCTGS. The 99-residue stretch at 20–118 folds into the Ig-like domain; that stretch reads QSVLTQPPSV…CKAWDNSLNA (99 aa). Cysteine 41 and cysteine 109 are oxidised to a cystine. Positions 45-53 are complementarity-determining-1; the sequence is SSNIGAGYV. The framework-2 stretch occupies residues 54 to 70; the sequence is VHWYQQLPGTAPKLLIY. Residues 71–73 form a complementarity-determining-2 region; that stretch reads GNS. A framework-3 region spans residues 74-109; that stretch reads NRPSGVPDQFSGSKSGTSASLAITGLQSEDEADYYC. The complementarity-determining-3 stretch occupies residues 110 to 118; it reads KAWDNSLNA.

As to quaternary structure, immunoglobulins are composed of two identical heavy chains and two identical light chains; disulfide-linked.

It is found in the secreted. It localises to the cell membrane. Its function is as follows. Probable non-functional open reading frame (ORF) of V region of the variable domain of immunoglobulin light chains. Non-functional ORF generally cannot participate in the synthesis of a productive immunoglobulin chain due to altered V-(D)-J or switch recombination and/or splicing site (at mRNA level) and/or conserved amino acid change (protein level). Immunoglobulins, also known as antibodies, are membrane-bound or secreted glycoproteins produced by B lymphocytes. In the recognition phase of humoral immunity, the membrane-bound immunoglobulins serve as receptors which, upon binding of a specific antigen, trigger the clonal expansion and differentiation of B lymphocytes into immunoglobulins-secreting plasma cells. Secreted immunoglobulins mediate the effector phase of humoral immunity, which results in the elimination of bound antigens. The antigen binding site is formed by the variable domain of one heavy chain, together with that of its associated light chain. Thus, each immunoglobulin has two antigen binding sites with remarkable affinity for a particular antigen. The variable domains are assembled by a process called V-(D)-J rearrangement and can then be subjected to somatic hypermutations which, after exposure to antigen and selection, allow affinity maturation for a particular antigen. The polypeptide is Probable non-functional immunoglobulin lambda variable 1-50 (Homo sapiens (Human)).